Here is a 57-residue protein sequence, read N- to C-terminus: UPF0391 membrane protein IL0696 (57 aa).

Helical transmembrane passes span 4 to 24 (WVLI…GGIA) and 28 to 48 (AGIA…SLVV).

The protein belongs to the UPF0391 family.

The protein localises to the cell membrane. The protein is UPF0391 membrane protein IL0696 of Idiomarina loihiensis (strain ATCC BAA-735 / DSM 15497 / L2-TR).